Here is a 79-residue protein sequence, read N- to C-terminus: uncharacterized protein (79 aa).

2 helical membrane-spanning segments follow: residues 28–48 (CIILSGFAGLCMAYLYYALLA) and 51–71 (VALTEAILGGAILPALFAFTV).

Its subcellular location is the cell membrane. This is an uncharacterized protein from Methanocaldococcus jannaschii (strain ATCC 43067 / DSM 2661 / JAL-1 / JCM 10045 / NBRC 100440) (Methanococcus jannaschii).